Here is a 280-residue protein sequence, read N- to C-terminus: Protein synthesis inhibitor II (280 aa).

Ala1 is modified (N-acetylalanine). Residue Glu174 is part of the active site.

It belongs to the ribosome-inactivating protein family. Type 1 RIP subfamily.

It localises to the cytoplasm. It catalyses the reaction Endohydrolysis of the N-glycosidic bond at one specific adenosine on the 28S rRNA.. Functionally, inhibits the elongation phase of protein synthesis. It inactivates fungal ribosomes even more effectively than mammalian ribosomes and is thought to function as a constitutive antifungal agent in plants. The polypeptide is Protein synthesis inhibitor II (RIP30A) (Hordeum vulgare (Barley)).